The following is a 117-amino-acid chain: MMLEPSIDKLLDQVDSKYSLVVLEAKRAHELRDKERPTKEFKAVKRTLQALEEIADGTVKIHPAPELKRETLVEKRELERLQAKMKEQLIKEQIAKEEAEEEAKQKNSRAAKAAAAE.

The span at 96-105 shows a compositional bias: basic and acidic residues; it reads KEEAEEEAKQ. Positions 96–117 are disordered; that stretch reads KEEAEEEAKQKNSRAAKAAAAE. Residues 108 to 117 show a composition bias toward low complexity; sequence SRAAKAAAAE.

The protein belongs to the RNA polymerase subunit omega family. As to quaternary structure, the RNAP catalytic core consists of 2 alpha, 1 beta, 1 beta' and 1 omega subunit. When a sigma factor is associated with the core the holoenzyme is formed, which can initiate transcription.

It carries out the reaction RNA(n) + a ribonucleoside 5'-triphosphate = RNA(n+1) + diphosphate. Promotes RNA polymerase assembly. Latches the N- and C-terminal regions of the beta' subunit thereby facilitating its interaction with the beta and alpha subunits. This chain is DNA-directed RNA polymerase subunit omega, found in Lactococcus lactis subsp. cremoris (strain MG1363).